The chain runs to 360 residues: Probable dual-specificity RNA methyltransferase RlmN (360 aa).

E91 (proton acceptor) is an active-site residue. Positions 97-335 (QHYGQSVCVT…CVVRQEHGTD (239 aa)) constitute a Radical SAM core domain. Cysteines 104 and 340 form a disulfide. Positions 111, 115, and 118 each coordinate [4Fe-4S] cluster. Residues 163–164 (GE), S195, 218–220 (SLH), and N296 contribute to the S-adenosyl-L-methionine site. C340 acts as the S-methylcysteine intermediate in catalysis.

Belongs to the radical SAM superfamily. RlmN family. [4Fe-4S] cluster serves as cofactor.

It localises to the cytoplasm. The enzyme catalyses adenosine(2503) in 23S rRNA + 2 reduced [2Fe-2S]-[ferredoxin] + 2 S-adenosyl-L-methionine = 2-methyladenosine(2503) in 23S rRNA + 5'-deoxyadenosine + L-methionine + 2 oxidized [2Fe-2S]-[ferredoxin] + S-adenosyl-L-homocysteine. It catalyses the reaction adenosine(37) in tRNA + 2 reduced [2Fe-2S]-[ferredoxin] + 2 S-adenosyl-L-methionine = 2-methyladenosine(37) in tRNA + 5'-deoxyadenosine + L-methionine + 2 oxidized [2Fe-2S]-[ferredoxin] + S-adenosyl-L-homocysteine. Its function is as follows. Specifically methylates position 2 of adenine 2503 in 23S rRNA and position 2 of adenine 37 in tRNAs. The sequence is that of Probable dual-specificity RNA methyltransferase RlmN from Streptococcus equi subsp. zooepidemicus (strain H70).